Here is a 982-residue protein sequence, read N- to C-terminus: MSARPFSTPFDRERRVRSTLKKVFGFDSFKTPLQESATMAVVKGAEDVFVCMPTGAGKSLCYQLPALLASGITIVVSPLIALIQDQVDHLLALKVQVSSLNSKLSVQERKELLSDLERDKPRTKLLYITPEMAASASFQPTLNSLVSRNLLSYLVVDEAHCVSQWGHDFRPDYLRLGALRSRLAHAPCVALTATATPQVQEDVFAALHLKQPVASFKTPCFRANLFYDVQFKELIPDVYGNLRDFCLKALGQKAENGSSSGCGIVYCRTREACEQLAIELSSRGVNAKAYHAGLKASDRTQVQNEWMEEKVPVIVATISFGMGVDKANVRFVAHWNIAKSMAGYYQESGRAGRDGKPSWCRLYYSRNDRDQVSFLIRKELAKLQEKRGNKPSDKATLLAFDALVTFCEEVGCRHAAIAKYFGDAPPACAKGCDYCQNPAAITKKLDALERSSSWSKTCIGPSQGNGFDPELYEGGRRGYGGFSRYDEGSGGSGDEGRDEAHKREWNLFYQKQMSLRKGKEPKIEEFTPPDEDCPLREASSRKIPKLTVKAREHCLRLLEEALISNHQAAGSTHGADLQAKAVELEHETFRNAKMVNLYKASVLKKVAEIHKASKDGQLYDMESGTKSCGAAAEFSEPSDYDIPPTSHVYSLKPKRVGAGFSKGPCSFQTATELLGKSHSQKQAPEAMLEGGQEPPGWVCDLQDEDRSKPHPGYQEKALGSSVNCGDPSPEKKTKGSSQGSAKARASKKQQLLATAARKDSQNITRFLCQRTESPPLPASVPRSEDASPSCGDVPGKCTQEVGAQGHLVAVFQTEGPRERPSTCSLRDQSFPEGQPSPLKETQAEKRPRPQQGNPERRAQKRLRPSTKSSILAEAKDSTLASDRSTENKVAQEPCQLSASGTSLREAADIVVRHLTPFYKEGRFISKDLFKGFARHLSHLLAQQLSPGRSVKEEAQSLIKQFFHNRARCESEADWHSLRGPQR.

The 175-residue stretch at 39 to 213 folds into the Helicase ATP-binding domain; that stretch reads MAVVKGAEDV…FAALHLKQPV (175 aa). Residue 52–59 participates in ATP binding; the sequence is MPTGAGKS. Residues 157 to 160 carry the DEAH box motif; that stretch reads DEAH. Residues 241 to 398 form the Helicase C-terminal domain; the sequence is NLRDFCLKAL…NKPSDKATLL (158 aa). Residues Cys-412, Cys-428, Cys-432, and Cys-435 each coordinate Zn(2+). 2 positions are modified to phosphoserine: Ser-489 and Ser-492. The interaction with POLR2A stretch occupies residues 491 to 621; the sequence is GSGDEGRDEA…ASKDGQLYDM (131 aa). Thr-527 is subject to Phosphothreonine. Residues 653–726 form an interaction with RAD51 region; it reads PKRVGAGFSK…ALGSSVNCGD (74 aa). Disordered regions lie at residues 675–797 and 812–893; these read GKSH…PGKC and QTEG…AQEP. Phosphoserine; by CDK1 is present on Ser-728.

This sequence belongs to the helicase family. RecQ subfamily. Monomer. Interacts with TOP2A, TOP3A and TOP3B. Interacts with RNA polymerase II subunit POLR2A. Identified in a complex with the RNA polymerase II core bound to DNA. Interacts with RAD51. Interacts with WRN; this interaction stimulates WRN helicase activity on DNA fork duplexes. Interacts with MUS1; this interaction promotes MUS81-dependent mitotic DNA synthesis. The cofactor is Zn(2+). Phosphorylated by CDK1 at Ser-728; this phosphorylation is required for RECQL5-mediated disruption of RAD51 filaments on stalled replication forks.

It is found in the nucleus. The protein resides in the nucleoplasm. It catalyses the reaction Couples ATP hydrolysis with the unwinding of duplex DNA by translocating in the 3'-5' direction.. The catalysed reaction is ATP + H2O = ADP + phosphate + H(+). Its function is as follows. DNA helicase that plays an important role in DNA replication, transcription and repair. Binds to the RNA polymerase II subunit POLR2A during transcription elongation and suppresses transcription-associated genomic instability. Also associates with POLR1A and enforces the stability of ribosomal DNA arrays. Plays an important role in mitotic chromosome separation after cross-over events and cell cycle progress. Mechanistically, removes RAD51 filaments protecting stalled replication forks at common fragile sites and stimulates MUS81-EME1 endonuclease leading to mitotic DNA synthesis. Required for efficient DNA repair, including repair of inter-strand cross-links. Stimulates DNA decatenation mediated by TOP2A. Prevents sister chromatid exchange and homologous recombination. The chain is ATP-dependent DNA helicase Q5 (Recql5) from Mus musculus (Mouse).